The sequence spans 499 residues: CD-NTase-associated protein 4 (499 aa).

Residues 1 to 226 (MATSVLANWH…DFRFDGAARA (226 aa)) are N-terminal endonuclease domain. Catalysis depends on residues D49 and Q72. D49 lines the Mg(2+) pocket. Mg(2+) is bound at residue I73. The active site involves K74. The segment at 258–464 (FRNVALRSFS…HIFSAAPNAV (207 aa)) is C-terminal SAVED domain.

The protein belongs to the Cap4 nuclease family. As to quaternary structure, a monomer in the absence of ligand, in its presence it forms oligomers. Mg(2+) serves as cofactor.

With respect to regulation, DNase activity is activated upon ligand binding (cAAG). Inhibited by EDTA. Effector DNase of a CBASS antivirus system. CBASS (cyclic oligonucleotide-based antiphage signaling system) provides immunity against bacteriophages. The CD-NTase protein (CdnD) synthesizes cyclic nucleotides in response to infection; these serve as specific second messenger signals. The signals activate a diverse range of effectors, leading to bacterial cell death and thus abortive phage infection. A type II-C(AAG) CBASS system. In terms of biological role, binds second messenger 3',3',3'-cyclic AMP-AMP-GMP (cAAG). In the presence of cAAG (synthesized by the cognate CD-NTase protein in the CBASS operon), endonucleolytically degrades dsDNA to approximately 17 bp length fragments, with a preference for 5'-C|NG sites. Only binds DNA in the presence of cAAG. Not activated by c-di-AMP, c-di-GMP, 3',3'-cyclic GMP-AMP (cGAMP) or the second messenger of A.baumanii strain ATCC 27244. Its function is as follows. Protects E.coli against phage T2 infection. When the cdnD-cap2-cap3-cap4 operon is introduced in E.coli there is a more than 10(3) decrease in the efficiency of T2 plaque formation. The operon does not protect against phage T5 and only about 10-fold against T7. Expression of cdnD-cap4 alone protects E.coli against phage T2 infection. This chain is CD-NTase-associated protein 4, found in Enterobacter hormaechei subsp. hoffmannii (strain UCI 50).